The following is a 224-amino-acid chain: Ribonuclease T (224 aa).

The Exonuclease domain occupies 20–194; that stretch reads VVIDVETAGF…YDTERTAELF (175 aa). The Mg(2+) site is built by D23, E25, H181, and D186. The active-site Proton donor/acceptor is the H181.

Belongs to the RNase T family. As to quaternary structure, homodimer. It depends on Mg(2+) as a cofactor.

Trims short 3' overhangs of a variety of RNA species, leaving a one or two nucleotide 3' overhang. Responsible for the end-turnover of tRNA: specifically removes the terminal AMP residue from uncharged tRNA (tRNA-C-C-A). Also appears to be involved in tRNA biosynthesis. This is Ribonuclease T from Shewanella putrefaciens (strain CN-32 / ATCC BAA-453).